The following is a 491-amino-acid chain: Aspartyl/glutamyl-tRNA(Asn/Gln) amidotransferase subunit B (491 aa).

Belongs to the GatB/GatE family. GatB subfamily. Heterotrimer of A, B and C subunits.

The catalysed reaction is L-glutamyl-tRNA(Gln) + L-glutamine + ATP + H2O = L-glutaminyl-tRNA(Gln) + L-glutamate + ADP + phosphate + H(+). The enzyme catalyses L-aspartyl-tRNA(Asn) + L-glutamine + ATP + H2O = L-asparaginyl-tRNA(Asn) + L-glutamate + ADP + phosphate + 2 H(+). Functionally, allows the formation of correctly charged Asn-tRNA(Asn) or Gln-tRNA(Gln) through the transamidation of misacylated Asp-tRNA(Asn) or Glu-tRNA(Gln) in organisms which lack either or both of asparaginyl-tRNA or glutaminyl-tRNA synthetases. The reaction takes place in the presence of glutamine and ATP through an activated phospho-Asp-tRNA(Asn) or phospho-Glu-tRNA(Gln). This chain is Aspartyl/glutamyl-tRNA(Asn/Gln) amidotransferase subunit B, found in Burkholderia cenocepacia (strain HI2424).